The primary structure comprises 639 residues: Serine protease HtrA-like (639 aa).

4 stretches are compositionally biased toward basic and acidic residues: residues 1-13 (MDND…PREQ), 21-75 (YFHN…EIHQ), 106-187 (QQLK…KESS), and 195-205 (KSQKIEQKEQK). The segment at 1–262 (MDNDKKHVIP…LENEPKNNDT (262 aa)) is disordered. A compositionally biased stretch (polar residues) spans 206 to 219 (ASSNETSNKELNSY). Basic and acidic residues-rich tracts occupy residues 220–235 (TKDK…DLKK) and 245–262 (NKLE…NNDT). The helical transmembrane segment at 277–297 (IVIVVAIILIVILISAIISTM) threads the bilayer. Catalysis depends on charge relay system residues His-374, Asp-404, and Ser-489. One can recognise a PDZ domain in the interval 527-629 (EIAEELEKKG…TLSAKIYREG (103 aa)).

This sequence belongs to the peptidase S1C family.

It is found in the cell membrane. The sequence is that of Serine protease HtrA-like from Staphylococcus haemolyticus (strain JCSC1435).